The following is a 195-amino-acid chain: Thymidine kinase (195 aa).

Residues 8-15 (GLMGSGKS) and 86-89 (DESQ) each bind ATP. Glu87 (proton acceptor) is an active-site residue. Zn(2+)-binding residues include Cys146, Cys151, Cys184, and His187.

It belongs to the thymidine kinase family. In terms of assembly, homotetramer.

Its subcellular location is the cytoplasm. It catalyses the reaction thymidine + ATP = dTMP + ADP + H(+). In Bacillus subtilis subsp. natto, this protein is Thymidine kinase (tdk).